A 245-amino-acid polypeptide reads, in one-letter code: D-aminoacyl-tRNA deacylase (245 aa).

It belongs to the DtdA deacylase family. In terms of assembly, monomer. Zn(2+) serves as cofactor.

The catalysed reaction is a D-aminoacyl-tRNA + H2O = a tRNA + a D-alpha-amino acid + H(+). The enzyme catalyses glycyl-tRNA(Ala) + H2O = tRNA(Ala) + glycine + H(+). Its function is as follows. D-aminoacyl-tRNA deacylase with broad substrate specificity. By recycling D-aminoacyl-tRNA to D-amino acids and free tRNA molecules, this enzyme counteracts the toxicity associated with the formation of D-aminoacyl-tRNA entities in vivo. This is D-aminoacyl-tRNA deacylase from Ignicoccus hospitalis (strain KIN4/I / DSM 18386 / JCM 14125).